The chain runs to 413 residues: Transposon Ty4-H Gag polyprotein (413 aa).

Positions 39 to 115 (RKVSIKDEQV…IQLLETNENN (77 aa)) form a coiled coil. The disordered stretch occupies residues 380–413 (RQQQLKSSAKRTKVLEQDTKKVKQSVQQQKTGNY). The segment covering 403–413 (QSVQQQKTGNY) has biased composition (low complexity).

Its function is as follows. Capsid protein (CA) is the structural component of the virus-like particle (VLP), forming the shell that encapsulates the retrotransposons dimeric RNA genome. The protein is Transposon Ty4-H Gag polyprotein (TY4A-H) of Saccharomyces cerevisiae (strain ATCC 204508 / S288c) (Baker's yeast).